The chain runs to 458 residues: Probable mitochondrial chaperone BCS1-B (458 aa).

Topologically, residues 1–26 (MENVITNNNKGLPKSILKFIPEPIQP) are mitochondrial intermembrane. The helical transmembrane segment at 27–47 (LFENPFFSAGFGLIGVGSILA) threads the bilayer. Over 48-458 (MGRKGFQQAM…INNLNELIKK (411 aa)) the chain is Mitochondrial matrix. Position 248-255 (248-255 (GPPGTGKS)) interacts with ATP.

It belongs to the AAA ATPase family. BCS1 subfamily.

The protein localises to the mitochondrion inner membrane. The catalysed reaction is ATP + H2O = ADP + phosphate + H(+). In terms of biological role, chaperone necessary for the assembly of mitochondrial respiratory chain complex III. This is Probable mitochondrial chaperone BCS1-B (bcsl1b) from Dictyostelium discoideum (Social amoeba).